The following is a 790-amino-acid chain: Ribonucleoside-diphosphate reductase large subunit (790 aa).

Substrate-binding positions include T208, 223–224 (SC), G254, 436–440 (NLCTE), and 621–625 (PTVSS). C224 and C453 are joined by a disulfide. N436 (proton acceptor) is an active-site residue. C438 functions as the Cysteine radical intermediate in the catalytic mechanism. E440 functions as the Proton acceptor in the catalytic mechanism.

The protein belongs to the ribonucleoside diphosphate reductase large chain family. As to quaternary structure, heterotetramer composed of a homodimer of the large subunit (R1) and a homodimer of the small subunit (R2). Larger multisubunit protein complex are also active, composed of (R1)n(R2)n.

It carries out the reaction a 2'-deoxyribonucleoside 5'-diphosphate + [thioredoxin]-disulfide + H2O = a ribonucleoside 5'-diphosphate + [thioredoxin]-dithiol. Ribonucleoside-diphosphate reductase holoenzyme provides the precursors necessary for viral DNA synthesis. Allows virus growth in non-dividing cells, as well as reactivation from latency in infected hosts. Catalyzes the biosynthesis of deoxyribonucleotides from the corresponding ribonucleotides. In Equus caballus (Horse), this protein is Ribonucleoside-diphosphate reductase large subunit.